Consider the following 503-residue polypeptide: Capsanthin/capsorubin synthase, chromoplastic (503 aa).

88–117 lines the NAD(+) pocket; the sequence is VIIIGTGPAGLRLAEQVSSRHSVKVCCVDP.

Belongs to the lycopene cyclase family.

It localises to the plastid. It is found in the chromoplast. It carries out the reaction all-trans-violaxanthin = all-trans-capsorubin. The enzyme catalyses all-trans-antheraxanthin = all-trans-capsanthin. Its pathway is carotenoid biosynthesis; capsanthin biosynthesis; capsanthin from antheraxanthin: step 1/1. It participates in carotenoid biosynthesis; capsorubin biosynthesis; capsorubin from violaxanthin: step 1/1. Catalyzes the conversion of the ubiquitous 5,6-epoxycarotenoids, antheraxanthin and violaxanthin, into capsanthin and capsorubin, respectively. The chain is Capsanthin/capsorubin synthase, chromoplastic (CCS) from Citrus sinensis (Sweet orange).